The sequence spans 615 residues: Nuclear receptor subfamily 1 group D member 1 (615 aa).

Over residues 1 to 12 (MTTLDSNNNTGG) the composition is skewed to polar residues. Residues 1–70 (MTTLDSNNNT…TQDPARSFGT (70 aa)) form a required for phosphorylation by CSNK1E and cytoplasmic localization region. Residues 1-120 (MTTLDSNNNT…SSRVSPSKGT (120 aa)) form a disordered region. The interval 1–129 (MTTLDSNNNT…TSNITKLNGM (129 aa)) is modulating. Positions 14–34 (ITYIGSSGSSPSRTSPESLYS) are enriched in low complexity. Residues 35-48 (DSSNGSFQSLTQGC) show a composition bias toward polar residues. The crucial for activation of GJA1 stretch occupies residues 49 to 285 (PTYFPPSPTG…PPRSPSPEPT (237 aa)). S55 and S59 each carry phosphoserine; by GSK3-beta. Residues 72–103 (PPSLSDDSSPSSASSSSSSSSSSFYNGSPPGS) are compositionally biased toward low complexity. Residues 130–206 (VLLCKVCGDV…VGMSRDAVRF (77 aa)) constitute a DNA-binding region (nuclear receptor). NR C4-type zinc fingers lie at residues 133–153 (CKVC…CEGC) and 170–194 (CLKN…FKKC). Residues K192 and K193 each carry the N6-acetyllysine; by KAT5 modification. Disordered regions lie at residues 235–287 (LCPL…PTVE), 312–337 (PGNF…SQGC), and 357–385 (NGLR…PNSN). Over residues 253 to 262 (PSPPPAPAPT) the composition is skewed to pro residues. At T275 the chain carries Phosphothreonine; by CDK1. In terms of domain architecture, NR LBD spans 285-615 (TVEDVISQVA…KLLSFRVDAQ (331 aa)). K401 carries the post-translational modification N6-acetyllysine. C419 contributes to the heme binding site. Position 592 is an N6-acetyllysine (K592). H603 is a binding site for heme.

The protein belongs to the nuclear hormone receptor family. NR1 subfamily. In terms of assembly, binds DNA as a monomer or a homodimer. Interacts with C1D, NR2E3, SP1 and ZNHIT1. Interacts with OPHN1 (via C-terminus). Interacts with PER2; the interaction associates PER2 to BMAL1 promoter region. Interacts with CRY1. Interacts with CCAR2. Interacts with SIAH2. Interacts with FBXW7 and CDK1. Interacts with HUWE1. Interacts with NR0B2. Interacts with NFIL3. Interacts (via domain NR LBD) with HSP90AA1 and HSP90AB1. Ubiquitinated, leading to its proteasomal degradation. Ubiquitinated by the SCF(FBXW7) complex when phosphorylated by CDK1 leading to its proteasomal degradation. Ubiquitinated by SIAH2; leading to its proteasomal degradation. Rapidly ubiquitinated in response to inflammatory triggers and sumoylation is a prerequisite to its ubiquitination. In terms of processing, sumoylated by UBE2I, desumoylated by SENP1, and sumoylation is a prerequisite to its ubiquitination. Post-translationally, phosphorylated by CSNK1E; phosphorylation enhances its cytoplasmic localization. Undergoes lysosome-mediated degradation in a time-dependent manner in the liver.

It is found in the nucleus. Its subcellular location is the cytoplasm. The protein resides in the cell projection. The protein localises to the dendrite. It localises to the dendritic spine. Functionally, transcriptional repressor which coordinates circadian rhythm and metabolic pathways in a heme-dependent manner. Integral component of the complex transcription machinery that governs circadian rhythmicity and forms a critical negative limb of the circadian clock by directly repressing the expression of core clock components BMAL1, CLOCK and CRY1. Also regulates genes involved in metabolic functions, including lipid and bile acid metabolism, adipogenesis, gluconeogenesis and the macrophage inflammatory response. Acts as a receptor for heme which stimulates its interaction with the NCOR1/HDAC3 corepressor complex, enhancing transcriptional repression. Recognizes two classes of DNA response elements within the promoter of its target genes and can bind to DNA as either monomers or homodimers, depending on the nature of the response element. Binds as a monomer to a response element composed of the consensus half-site motif 5'-[A/G]GGTCA-3' preceded by an A/T-rich 5' sequence (RevRE), or as a homodimer to a direct repeat of the core motif spaced by two nucleotides (RevDR-2). Acts as a potent competitive repressor of ROR alpha (RORA) function and regulates the levels of its ligand heme by repressing the expression of PPARGC1A, a potent inducer of heme synthesis. Regulates lipid metabolism by repressing the expression of APOC3 and by influencing the activity of sterol response element binding proteins (SREBPs); represses INSIG2 which interferes with the proteolytic activation of SREBPs which in turn govern the rhythmic expression of enzymes with key functions in sterol and fatty acid synthesis. Regulates gluconeogenesis via repression of G6PC1 and PEPCK and adipocyte differentiation via repression of PPARG. Regulates glucagon release in pancreatic alpha-cells via the AMPK-NAMPT-SIRT1 pathway and the proliferation, glucose-induced insulin secretion and expression of key lipogenic genes in pancreatic-beta cells. Positively regulates bile acid synthesis by increasing hepatic expression of CYP7A1 via repression of NR0B2 and NFIL3 which are negative regulators of CYP7A1. Modulates skeletal muscle oxidative capacity by regulating mitochondrial biogenesis and autophagy; controls mitochondrial biogenesis and respiration by interfering with the STK11-PRKAA1/2-SIRT1-PPARGC1A signaling pathway. Represses the expression of SERPINE1/PAI1, an important modulator of cardiovascular disease and the expression of inflammatory cytokines and chemokines in macrophages. Represses gene expression at a distance in macrophages by inhibiting the transcription of enhancer-derived RNAs (eRNAs). Plays a role in the circadian regulation of body temperature and negatively regulates thermogenic transcriptional programs in brown adipose tissue (BAT); imposes a circadian oscillation in BAT activity, increasing body temperature when awake and depressing thermogenesis during sleep. In concert with NR2E3, regulates transcriptional networks critical for photoreceptor development and function. In addition to its activity as a repressor, can also act as a transcriptional activator. In the ovarian granulosa cells acts as a transcriptional activator of STAR which plays a role in steroid biosynthesis. In collaboration with SP1, activates GJA1 transcription in a heme-independent manner. Represses the transcription of CYP2B10, CYP4A10 and CYP4A14. Represses the transcription of CES2. Represses and regulates the circadian expression of TSHB in a NCOR1-dependent manner. Negatively regulates the protein stability of NR3C1 and influences the time-dependent subcellular distribution of NR3C1, thereby affecting its transcriptional regulatory activity. Plays a critical role in the circadian control of neutrophilic inflammation in the lung; under resting, non-stress conditions, acts as a rhythmic repressor to limit inflammatory activity whereas in the presence of inflammatory triggers undergoes ubiquitin-mediated degradation thereby relieving inhibition of the inflammatory response. Plays a key role in the circadian regulation of microglial activation and neuroinflammation; suppresses microglial activation through the NF-kappaB pathway in the central nervous system. Plays a role in the regulation of the diurnal rhythms of lipid and protein metabolism in the skeletal muscle via transcriptional repression of genes controlling lipid and amino acid metabolism in the muscle. The sequence is that of Nuclear receptor subfamily 1 group D member 1 (Nr1d1) from Rattus norvegicus (Rat).